The sequence spans 387 residues: Flap endonuclease 1 (387 aa).

Residues 1-104 (MGILGLSKLI…GELAKRAERR (104 aa)) form an N-domain region. A Mg(2+)-binding site is contributed by aspartate 34. 2 residues coordinate DNA: arginine 47 and arginine 70. Mg(2+)-binding residues include aspartate 86, glutamate 158, glutamate 160, aspartate 179, and aspartate 181. An I-domain region spans residues 122-253 (GIEKFNRRLV…KRAIELINNY (132 aa)). Residue glutamate 158 coordinates DNA. 2 residues coordinate DNA: glycine 231 and aspartate 233. Residue aspartate 233 coordinates Mg(2+). An interaction with PCNA region spans residues 336 to 344 (TQVRLDSFF). The segment at 345–387 (KTLPSTPNATNAAKRKAEEAKKSANNKKAKTSGGGGGRGRRPK) is disordered.

It belongs to the XPG/RAD2 endonuclease family. FEN1 subfamily. In terms of assembly, interacts with PCNA. Three molecules of FEN1 bind to one PCNA trimer with each molecule binding to one PCNA monomer. PCNA stimulates the nuclease activity without altering cleavage specificity. Mg(2+) is required as a cofactor. Post-translationally, phosphorylated. Phosphorylation upon DNA damage induces relocalization to the nuclear plasma.

Its subcellular location is the nucleus. It localises to the nucleolus. The protein localises to the nucleoplasm. It is found in the mitochondrion. In terms of biological role, structure-specific nuclease with 5'-flap endonuclease and 5'-3' exonuclease activities involved in DNA replication and repair. During DNA replication, cleaves the 5'-overhanging flap structure that is generated by displacement synthesis when DNA polymerase encounters the 5'-end of a downstream Okazaki fragment. It enters the flap from the 5'-end and then tracks to cleave the flap base, leaving a nick for ligation. Also involved in the long patch base excision repair (LP-BER) pathway, by cleaving within the apurinic/apyrimidinic (AP) site-terminated flap. Acts as a genome stabilization factor that prevents flaps from equilibrating into structures that lead to duplications and deletions. Also possesses 5'-3' exonuclease activity on nicked or gapped double-stranded DNA, and exhibits RNase H activity. Also involved in replication and repair of rDNA and in repairing mitochondrial DNA. This is Flap endonuclease 1 from Drosophila yakuba (Fruit fly).